The sequence spans 129 residues: Small ribosomal subunit protein uS11 (129 aa).

It belongs to the universal ribosomal protein uS11 family. As to quaternary structure, part of the 30S ribosomal subunit. Interacts with proteins S7 and S18. Binds to IF-3.

Located on the platform of the 30S subunit, it bridges several disparate RNA helices of the 16S rRNA. Forms part of the Shine-Dalgarno cleft in the 70S ribosome. This chain is Small ribosomal subunit protein uS11, found in Pseudomonas putida (strain GB-1).